A 1171-amino-acid polypeptide reads, in one-letter code: ATP-dependent helicase/deoxyribonuclease subunit B (1171 aa).

The UvrD-like helicase ATP-binding domain occupies 1-287 (MSLRFVIGRA…IPLMEQPRFH (287 aa)). 8–15 (GRAGSGKS) contributes to the ATP binding site. The region spanning 281 to 587 (MEQPRFHSPA…QFANIPPSLD (307 aa)) is the UvrD-like helicase C-terminal domain. Positions 805, 1129, 1132, and 1138 each coordinate [4Fe-4S] cluster.

The protein belongs to the helicase family. AddB/RexB type 1 subfamily. Heterodimer of AddA and AddB. It depends on Mg(2+) as a cofactor. The cofactor is [4Fe-4S] cluster.

In terms of biological role, the heterodimer acts as both an ATP-dependent DNA helicase and an ATP-dependent, dual-direction single-stranded exonuclease. Recognizes the chi site generating a DNA molecule suitable for the initiation of homologous recombination. The AddB subunit has 5' -&gt; 3' nuclease activity but not helicase activity. The protein is ATP-dependent helicase/deoxyribonuclease subunit B of Bacillus cereus (strain G9842).